A 100-amino-acid chain; its full sequence is Aspartyl/glutamyl-tRNA(Asn/Gln) amidotransferase subunit C (100 aa).

This sequence belongs to the GatC family. In terms of assembly, heterotrimer of A, B and C subunits.

The catalysed reaction is L-glutamyl-tRNA(Gln) + L-glutamine + ATP + H2O = L-glutaminyl-tRNA(Gln) + L-glutamate + ADP + phosphate + H(+). It carries out the reaction L-aspartyl-tRNA(Asn) + L-glutamine + ATP + H2O = L-asparaginyl-tRNA(Asn) + L-glutamate + ADP + phosphate + 2 H(+). Functionally, allows the formation of correctly charged Asn-tRNA(Asn) or Gln-tRNA(Gln) through the transamidation of misacylated Asp-tRNA(Asn) or Glu-tRNA(Gln) in organisms which lack either or both of asparaginyl-tRNA or glutaminyl-tRNA synthetases. The reaction takes place in the presence of glutamine and ATP through an activated phospho-Asp-tRNA(Asn) or phospho-Glu-tRNA(Gln). This is Aspartyl/glutamyl-tRNA(Asn/Gln) amidotransferase subunit C from Streptococcus equi subsp. zooepidemicus (strain H70).